We begin with the raw amino-acid sequence, 577 residues long: Laccase-17 (577 aa).

An N-terminal signal peptide occupies residues 1–22 (MALQLLLAVFSCVLLLPQPAFG). Plastocyanin-like domains lie at 30–146 (EIKM…PKRG) and 156–309 (KEVP…YEPP). N-linked (GlcNAc...) asparagine glycosylation is found at N35 and N76. Cu cation is bound by residues H80 and H82. N112 carries an N-linked (GlcNAc...) asparagine glycan. Residues H125 and H127 each coordinate Cu cation. N185, N201, N237, N297, N335, N383, N391, N401, N437, N444, N450, and N460 each carry an N-linked (GlcNAc...) asparagine glycan. Positions 427–561 (KFPWSPIVPF…RMAWLVLDGD (135 aa)) constitute a Plastocyanin-like 3 domain. The Cu cation site is built by H478, H481, H483, H540, C541, H542, and H546.

Belongs to the multicopper oxidase family. Requires Cu cation as cofactor. Ubiquitous with higher levels in the inflorescence stem.

Its subcellular location is the secreted. The protein localises to the extracellular space. The protein resides in the apoplast. The enzyme catalyses 4 hydroquinone + O2 = 4 benzosemiquinone + 2 H2O. In terms of biological role, lignin degradation and detoxification of lignin-derived products. The sequence is that of Laccase-17 (LAC17) from Arabidopsis thaliana (Mouse-ear cress).